A 352-amino-acid chain; its full sequence is Ion-translocating oxidoreductase complex subunit D (352 aa).

5 consecutive transmembrane segments (helical) span residues 20–40, 42–62, 78–109, 123–143, and 148–168; these read IMLL…WFFG, GTLV…ALVL, ALLT…VIIA, PAMI…TSWL, and IAVN…GHTA. Threonine 187 is modified (FMN phosphoryl threonine). 4 consecutive transmembrane segments (helical) span residues 214-234, 242-262, 267-287, and 301-318; these read ILAG…GVWL, WHIP…GWLF, LAAP…FFIL, and LMFG…RSFG.

The protein belongs to the NqrB/RnfD family. As to quaternary structure, the complex is composed of six subunits: RsxA, RsxB, RsxC, RsxD, RsxE and RsxG. FMN is required as a cofactor.

The protein resides in the cell inner membrane. Part of a membrane-bound complex that couples electron transfer with translocation of ions across the membrane. Required to maintain the reduced state of SoxR. This is Ion-translocating oxidoreductase complex subunit D from Shigella flexneri serotype 5b (strain 8401).